The following is a 134-amino-acid chain: Acyl carrier protein, chloroplastic (134 aa).

The transit peptide at 1–51 directs the protein to the chloroplast; that stretch reads MSTTFCSSVSMQATSLAATTRISFQKPGLVSRTNLSFNLRRSIPTRLSVSC. Positions 55-130 constitute a Carrier domain; it reads PETVEKVSKI…EAAELIEELV (76 aa). The residue at position 90 (Ser90) is an O-(pantetheine 4'-phosphoryl)serine.

It belongs to the acyl carrier protein (ACP) family. 4'-phosphopantetheine is transferred from CoA to a specific serine of apo-ACP by acpS. This modification is essential for activity because fatty acids are bound in thioester linkage to the sulfhydryl of the prosthetic group. As to expression, seed.

The protein resides in the plastid. The protein localises to the chloroplast. It participates in lipid metabolism; fatty acid biosynthesis. In terms of biological role, carrier of the growing fatty acid chain in fatty acid biosynthesis. The protein is Acyl carrier protein, chloroplastic (ACL1.A2) of Brassica napus (Rape).